Consider the following 344-residue polypeptide: Pyruvate dehydrogenase E1 component subunit alpha (344 aa).

The pyruvate site is built by His55, Tyr81, Arg82, Ala130, Ile132, Asp168, Gly169, and Asn197. The thiamine diphosphate site is built by Tyr81, Arg82, Ala130, Ile132, Asp168, Gly169, Asn197, and His266. Asp168 is a binding site for Mg(2+). Asn197 lines the Mg(2+) pocket.

Heterodimer of an alpha and a beta chain. Requires thiamine diphosphate as cofactor. The cofactor is Mg(2+).

The protein resides in the plastid. Its subcellular location is the chloroplast. It carries out the reaction N(6)-[(R)-lipoyl]-L-lysyl-[protein] + pyruvate + H(+) = N(6)-[(R)-S(8)-acetyldihydrolipoyl]-L-lysyl-[protein] + CO2. In terms of biological role, the pyruvate dehydrogenase complex catalyzes the overall conversion of pyruvate to acetyl-CoA and CO(2). It contains multiple copies of three enzymatic components: pyruvate dehydrogenase (E1), dihydrolipoamide acetyltransferase (E2) and lipoamide dehydrogenase (E3). The protein is Pyruvate dehydrogenase E1 component subunit alpha (pdhA) of Porphyra purpurea (Red seaweed).